A 229-amino-acid polypeptide reads, in one-letter code: Potassium/proton antiporter CemA (229 aa).

Transmembrane regions (helical) follow at residues 6 to 26, 107 to 127, and 189 to 209; these read AFIP…ISLC, ILHF…SFWG, and ILSG…KYWI.

The protein belongs to the CemA family.

The protein localises to the plastid. It localises to the chloroplast inner membrane. The enzyme catalyses K(+)(in) + H(+)(out) = K(+)(out) + H(+)(in). In terms of biological role, contributes to K(+)/H(+) antiport activity by supporting proton efflux to control proton extrusion and homeostasis in chloroplasts in a light-dependent manner to modulate photosynthesis. Prevents excessive induction of non-photochemical quenching (NPQ) under continuous-light conditions. Indirectly promotes efficient inorganic carbon uptake into chloroplasts. The polypeptide is Potassium/proton antiporter CemA (Nasturtium officinale (Watercress)).